The chain runs to 78 residues: Acyl carrier protein (78 aa).

The Carrier domain occupies 2-77 (STIEERVKKI…AAIDYINGHQ (76 aa)). Serine 37 carries the O-(pantetheine 4'-phosphoryl)serine modification.

Belongs to the acyl carrier protein (ACP) family. In terms of processing, 4'-phosphopantetheine is transferred from CoA to a specific serine of apo-ACP by AcpS. This modification is essential for activity because fatty acids are bound in thioester linkage to the sulfhydryl of the prosthetic group.

It is found in the cytoplasm. Its pathway is lipid metabolism; fatty acid biosynthesis. In terms of biological role, carrier of the growing fatty acid chain in fatty acid biosynthesis. The chain is Acyl carrier protein from Shigella flexneri.